Reading from the N-terminus, the 640-residue chain is Threonine--tRNA ligase (640 aa).

The region spanning 1 to 61 (MPIITLPNGD…TEDSTLQIIT (61 aa)) is the TGS domain. Residues 242-533 (DHRKIGKALD…LIEHYAGFMP (292 aa)) form a catalytic region. Residues Cys333, His384, and His510 each coordinate Zn(2+).

The protein belongs to the class-II aminoacyl-tRNA synthetase family. In terms of assembly, homodimer. Requires Zn(2+) as cofactor.

It localises to the cytoplasm. It carries out the reaction tRNA(Thr) + L-threonine + ATP = L-threonyl-tRNA(Thr) + AMP + diphosphate + H(+). Catalyzes the attachment of threonine to tRNA(Thr) in a two-step reaction: L-threonine is first activated by ATP to form Thr-AMP and then transferred to the acceptor end of tRNA(Thr). Also edits incorrectly charged L-seryl-tRNA(Thr). This Acinetobacter baumannii (strain AB0057) protein is Threonine--tRNA ligase.